Consider the following 258-residue polypeptide: Tritrans,polycis-undecaprenyl-diphosphate synthase (geranylgeranyl-diphosphate specific) (258 aa).

Residue D37 is part of the active site. D37 is a binding site for Mg(2+). Residues 38–41 (GNRR), H54, and 82–84 (STE) contribute to the substrate site. Residue N85 is the Proton acceptor of the active site. Substrate contacts are provided by residues F86, R88, R207, and 213 to 215 (RIS). E226 is a Mg(2+) binding site.

This sequence belongs to the UPP synthase family. Homodimer. Mg(2+) is required as a cofactor.

It catalyses the reaction geranylgeranyl diphosphate + 7 isopentenyl diphosphate = tri-trans,hepta-cis-undecaprenyl diphosphate + 7 diphosphate. Functionally, catalyzes the sequential condensation of isopentenyl diphosphate (IPP) with geranylgeranyl diphosphate (GGPP) to yield (2Z,6Z,10Z,14Z,18Z,22Z,26Z,30E,34E,38E)-undecaprenyl diphosphate (tritrans,heptacis-UPP). It is probably the precursor of glycosyl carrier lipids. This is Tritrans,polycis-undecaprenyl-diphosphate synthase (geranylgeranyl-diphosphate specific) from Thermoplasma acidophilum (strain ATCC 25905 / DSM 1728 / JCM 9062 / NBRC 15155 / AMRC-C165).